A 271-amino-acid chain; its full sequence is NADPH-dependent 7-cyano-7-deazaguanine reductase (271 aa).

Residue 79–81 (IES) participates in substrate binding. An NADPH-binding site is contributed by 81–82 (SK). Cysteine 178 (thioimide intermediate) is an active-site residue. The Proton donor role is filled by aspartate 185. 217 to 218 (HE) lines the substrate pocket. 246-247 (RG) lines the NADPH pocket.

It belongs to the GTP cyclohydrolase I family. QueF type 2 subfamily. Homodimer.

Its subcellular location is the cytoplasm. It carries out the reaction 7-aminomethyl-7-carbaguanine + 2 NADP(+) = 7-cyano-7-deazaguanine + 2 NADPH + 3 H(+). It participates in tRNA modification; tRNA-queuosine biosynthesis. In terms of biological role, catalyzes the NADPH-dependent reduction of 7-cyano-7-deazaguanine (preQ0) to 7-aminomethyl-7-deazaguanine (preQ1). This is NADPH-dependent 7-cyano-7-deazaguanine reductase from Acinetobacter baylyi (strain ATCC 33305 / BD413 / ADP1).